The chain runs to 1604 residues: Metabotropic glutamate receptor-like protein R (1604 aa).

An N-terminal signal peptide occupies residues 1–27 (MVIKKPFIFIFICFLICLLICIDLTNC). The Extracellular segment spans residues 28-1149 (NTINNNNNNN…TDVSKTKIAK (1122 aa)). Residues 38-69 (NNNNNNNNNNNNNNNNNNNNNNNNNNNNNNDN) show a composition bias toward low complexity. Residues 38–72 (NNNNNNNNNNNNNNNNNNNNNNNNNNNNNNDNNEN) form a disordered region. Residues 98–133 (DFYINKIKKEIKDREKYKNNIENEILKINSQKKRKK) adopt a coiled-coil conformation. Positions 213–263 (NNNNNNNNNNNNNNNNNNKNNNNNNNNKNNNNNNNNKNNNNNNNNKNNNKN) are disordered. N-linked (GlcNAc...) asparagine glycans are attached at residues asparagine 285, asparagine 327, asparagine 359, asparagine 375, asparagine 489, asparagine 498, asparagine 525, asparagine 577, asparagine 593, asparagine 624, asparagine 768, asparagine 837, asparagine 841, asparagine 851, asparagine 864, asparagine 876, asparagine 885, asparagine 888, asparagine 913, asparagine 967, asparagine 991, asparagine 1097, and asparagine 1109. Residues 1150–1170 (IIIGISAIIVSIGVLITAILT) traverse the membrane as a helical segment. The Cytoplasmic portion of the chain corresponds to 1171–1184 (FIYRKRKIMRYSNP). Residues 1185 to 1205 (VFLLIILVGCVCGLVSTFVSF) form a helical membrane-spanning segment. Over 1206–1211 (STTSAT) the chain is Extracellular. A helical membrane pass occupies residues 1212–1232 (CSIRMVLIPLFFFIITSAIFI). Residues 1233-1256 (KQYRVYCLIRGVEELHDMSIENSY) lie on the Cytoplasmic side of the membrane. A helical transmembrane segment spans residues 1257-1277 (LLKLQSFILIIPAILIAVSVI). At 1278 to 1304 (ATRMHRKYNFDLQKETIQAYCYSKNFY) the chain is on the extracellular side. A helical membrane pass occupies residues 1305–1325 (IIFICLALYEFSILLYGCWIV). At 1326–1340 (IKCRQYRSFPGSFNE) the chain is on the cytoplasmic side. Residues 1341 to 1361 (FFYIGVLIYVLTVILVVSIPI) traverse the membrane as a helical segment. At 1362–1372 (GFALLNSALTD) the chain is on the extracellular side. The helical transmembrane segment at 1373-1393 (FLLYSIPILVLIVAIIGLLFA) threads the bilayer. Residues 1394 to 1604 (PKFYFLFRTD…KSSQNSPLLD (211 aa)) lie on the Cytoplasmic side of the membrane. Residues 1457-1604 (TGSNTSDDVS…KSSQNSPLLD (148 aa)) are disordered. Low complexity-rich tracts occupy residues 1471–1527 (FDSP…NKNN) and 1534–1556 (SSSNSSSTADFEISSSGESGRSS). Basic residues predominate over residues 1563-1572 (NNKKNRRKNS). Positions 1573-1584 (LRTPILNSLLSP) are enriched in polar residues.

Belongs to the G-protein coupled receptor 3 family. GABA-B receptor subfamily.

The protein resides in the membrane. The chain is Metabotropic glutamate receptor-like protein R (grlR) from Dictyostelium discoideum (Social amoeba).